Consider the following 774-residue polypeptide: C6 finger domain transcription factor nscR (774 aa).

Positions 17-43 (CELCRERKIKCDKVDPCNNCVSAGVVC) form a DNA-binding region, zn(2)-C6 fungal-type. Disordered stretches follow at residues 61-94 (RPMSPTFVPPRAPTPVAGPVPSEKKQTDHSSGAV), 536-559 (LQLPQPSNGSSQPPSSPSPRPQEH), and 665-697 (PTFSLGSSTGTSAAPTPRSRASSTPSDTLSDLS). The segment covering 67 to 78 (FVPPRAPTPVAG) has biased composition (pro residues). A compositionally biased stretch (low complexity) spans 536–548 (LQLPQPSNGSSQP). The span at 665-674 (PTFSLGSSTG) shows a compositional bias: polar residues. A compositionally biased stretch (low complexity) spans 675-697 (TSAAPTPRSRASSTPSDTLSDLS).

Its subcellular location is the nucleus. In terms of biological role, transcription factor that specifically regulates the neosartoricin biosynthesis gene cluster. This is C6 finger domain transcription factor nscR from Aspergillus fumigatus (strain ATCC MYA-4609 / CBS 101355 / FGSC A1100 / Af293) (Neosartorya fumigata).